A 504-amino-acid polypeptide reads, in one-letter code: Maturase K (504 aa).

The protein belongs to the intron maturase 2 family. MatK subfamily.

Its subcellular location is the plastid. The protein localises to the chloroplast. Its function is as follows. Usually encoded in the trnK tRNA gene intron. Probably assists in splicing its own and other chloroplast group II introns. In Cynophalla hastata (Broadleaf caper), this protein is Maturase K.